Reading from the N-terminus, the 109-residue chain is uncharacterized protein (109 aa).

It to E.coli YtfG C-terminal region.

This is an uncharacterized protein from Haemophilus influenzae (strain ATCC 51907 / DSM 11121 / KW20 / Rd).